A 151-amino-acid chain; its full sequence is Deoxyuridine 5'-triphosphate nucleotidohydrolase (151 aa).

Substrate contacts are provided by residues 70 to 72 (RSG), Asn-83, 87 to 89 (LID), and Met-97.

Belongs to the dUTPase family. Requires Mg(2+) as cofactor.

The enzyme catalyses dUTP + H2O = dUMP + diphosphate + H(+). The protein operates within pyrimidine metabolism; dUMP biosynthesis; dUMP from dCTP (dUTP route): step 2/2. This enzyme is involved in nucleotide metabolism: it produces dUMP, the immediate precursor of thymidine nucleotides and it decreases the intracellular concentration of dUTP so that uracil cannot be incorporated into DNA. In Pseudomonas fluorescens (strain ATCC BAA-477 / NRRL B-23932 / Pf-5), this protein is Deoxyuridine 5'-triphosphate nucleotidohydrolase.